A 137-amino-acid polypeptide reads, in one-letter code: Large ribosomal subunit protein uL11 (137 aa).

It belongs to the universal ribosomal protein uL11 family. Part of the ribosomal stalk of the 50S ribosomal subunit. Interacts with L10 and the large rRNA to form the base of the stalk. L10 forms an elongated spine to which L12 dimers bind in a sequential fashion forming a multimeric L10(L12)X complex. One or more lysine residues are methylated.

Functionally, forms part of the ribosomal stalk which helps the ribosome interact with GTP-bound translation factors. The protein is Large ribosomal subunit protein uL11 of Mycoplasma pneumoniae (strain ATCC 29342 / M129 / Subtype 1) (Mycoplasmoides pneumoniae).